The sequence spans 232 residues: 2,3-bisphosphoglycerate-dependent phosphoglycerate mutase (232 aa).

Substrate contacts are provided by residues 10-17 (RHGESQWN), 23-24 (TG), arginine 62, 89-92 (ERHY), lysine 100, 116-117 (RR), and 186-187 (GN). Histidine 11 (tele-phosphohistidine intermediate) is an active-site residue. The active-site Proton donor/acceptor is glutamate 89.

The protein belongs to the phosphoglycerate mutase family. BPG-dependent PGAM subfamily. As to quaternary structure, homodimer.

The catalysed reaction is (2R)-2-phosphoglycerate = (2R)-3-phosphoglycerate. It participates in carbohydrate degradation; glycolysis; pyruvate from D-glyceraldehyde 3-phosphate: step 3/5. Its function is as follows. Catalyzes the interconversion of 2-phosphoglycerate and 3-phosphoglycerate. This Blochmanniella pennsylvanica (strain BPEN) protein is 2,3-bisphosphoglycerate-dependent phosphoglycerate mutase.